The following is a 246-amino-acid chain: Probable transcriptional regulatory protein CLJ_B3338 (246 aa).

It belongs to the TACO1 family.

Its subcellular location is the cytoplasm. This chain is Probable transcriptional regulatory protein CLJ_B3338, found in Clostridium botulinum (strain 657 / Type Ba4).